The chain runs to 134 residues: Histone H2A (134 aa).

Residues 1-10 (MTGGKSGGKA) show a composition bias toward gly residues. The tract at residues 1–26 (MTGGKSGGKASGSKSSAQSRSSKAGL) is disordered. An N6-acetyllysine mark is found at lysine 5 and lysine 9. Residues 11-25 (SGSKSSAQSRSSKAG) are compositionally biased toward low complexity. Residue glutamine 107 is modified to N5-methylglutamine. Serine 131 is subject to Phosphoserine. Positions 131-132 (SQ) match the [ST]-Q motif motif.

This sequence belongs to the histone H2A family. The nucleosome is a histone octamer containing two molecules each of H2A, H2B, H3 and H4 assembled in one H3-H4 heterotetramer and two H2A-H2B heterodimers. The octamer wraps approximately 147 bp of DNA. Post-translationally, phosphorylated to form H2AS128ph (gamma-H2A) in response to DNA double-strand breaks (DSBs) generated by exogenous genotoxic agents and by stalled replication forks. Phosphorylation is dependent on the DNA damage checkpoint kinases MEC1/ATR and TEL1/ATM, spreads on either side of a detected DSB site and may mark the surrounding chromatin for recruitment of proteins required for DNA damage signaling and repair. Gamma-H2A is removed from the DNA prior to the strand invasion-primer extension step of the repair process and subsequently dephosphorylated. Dephosphorylation is necessary for efficient recovery from the DNA damage checkpoint. Acetylated by ESA1 to form H2AK4ac and H2AK7ac.

The protein resides in the nucleus. It is found in the chromosome. Core component of nucleosome which plays a central role in DNA double strand break (DSB) repair. Nucleosomes wrap and compact DNA into chromatin, limiting DNA accessibility to the cellular machineries which require DNA as a template. Histones thereby play a central role in transcription regulation, DNA repair, DNA replication and chromosomal stability. DNA accessibility is regulated via a complex set of post-translational modifications of histones, also called histone code, and nucleosome remodeling. In Phaeosphaeria nodorum (strain SN15 / ATCC MYA-4574 / FGSC 10173) (Glume blotch fungus), this protein is Histone H2A (HTA1).